The sequence spans 1416 residues: DNA-directed RNA polymerase subunit beta' (1416 aa).

Residues Cys-71, Cys-73, Cys-86, and Cys-89 each contribute to the Zn(2+) site. Residues Asp-461, Asp-463, and Asp-465 each contribute to the Mg(2+) site. Zn(2+) is bound by residues Cys-815, Cys-889, Cys-896, and Cys-899.

This sequence belongs to the RNA polymerase beta' chain family. As to quaternary structure, the RNAP catalytic core consists of 2 alpha, 1 beta, 1 beta' and 1 omega subunit. When a sigma factor is associated with the core the holoenzyme is formed, which can initiate transcription. It depends on Mg(2+) as a cofactor. Requires Zn(2+) as cofactor.

It carries out the reaction RNA(n) + a ribonucleoside 5'-triphosphate = RNA(n+1) + diphosphate. Its function is as follows. DNA-dependent RNA polymerase catalyzes the transcription of DNA into RNA using the four ribonucleoside triphosphates as substrates. The chain is DNA-directed RNA polymerase subunit beta' from Haemophilus influenzae (strain PittEE).